The following is a 434-amino-acid chain: Asparagine--tRNA ligase (434 aa).

This sequence belongs to the class-II aminoacyl-tRNA synthetase family.

It localises to the cytoplasm. It catalyses the reaction tRNA(Asn) + L-asparagine + ATP = L-asparaginyl-tRNA(Asn) + AMP + diphosphate + H(+). This Pyrococcus horikoshii (strain ATCC 700860 / DSM 12428 / JCM 9974 / NBRC 100139 / OT-3) protein is Asparagine--tRNA ligase.